Consider the following 141-residue polypeptide: MPKYYCEYCDKYLTHDSPSVRKSHTIGKVHQQAVTLYYKQFEAEWFKSQMQQKGGQVPMMPPFGMQPGLLPPNMVPGQFNIPMMPPGQFPFPPPPGQPMGGMPPHQQQPMSFNPHHPYPPPHLQQSAQQFNSNSPPSNNDQ.

A Matrin-type zinc finger spans residues 4–36 (YYCEYCDKYLTHDSPSVRKSHTIGKVHQQAVTL). Residues 69-141 (LLPPNMVPGQ…SNSPPSNNDQ (73 aa)) are disordered. A compositionally biased stretch (pro residues) spans 83–97 (MMPPGQFPFPPPPGQ). Composition is skewed to low complexity over residues 100–110 (GGMPPHQQQPM) and 124–141 (QQSA…NNDQ).

This sequence belongs to the U1 small nuclear ribonucleoprotein C family. As to quaternary structure, component of the U1 snRNP. The U1 snRNP is composed of the U1 snRNA and the 7 core Sm proteins SNRPB, SNRPD1, SNRPD2, SNRPD3, SNRPE, SNRPF and SNRPG that assemble in a heptameric protein ring on the Sm site of the small nuclear RNA to form the core snRNP, and at least 3 U1 snRNP-specific proteins SNRNP70/U1-70K, SNRPA/U1-A and SNRPC/U1-C. SNRPC/U1-C interacts with U1 snRNA and the 5' splice-site region of the pre-mRNA.

Its subcellular location is the nucleus. Component of the spliceosomal U1 snRNP, which is essential for recognition of the pre-mRNA 5' splice-site and the subsequent assembly of the spliceosome. SNRPC/U1-C is directly involved in initial 5' splice-site recognition for both constitutive and regulated alternative splicing. The interaction with the 5' splice-site seems to precede base-pairing between the pre-mRNA and the U1 snRNA. Stimulates commitment or early (E) complex formation by stabilizing the base pairing of the 5' end of the U1 snRNA and the 5' splice-site region. The sequence is that of U1 small nuclear ribonucleoprotein C from Heterostelium pallidum (strain ATCC 26659 / Pp 5 / PN500) (Cellular slime mold).